The sequence spans 319 residues: Cell division protein PomZ (319 aa).

61–68 (KGGTGKTS) lines the ATP pocket.

Belongs to the ParA family. In terms of assembly, interacts with FtsZ in pull-down experiments.

It is found in the cytoplasm. In terms of biological role, spatial regulator of cell division that is involved in identifying the incipient division site, recruiting FtsZ to the division site and stabilizing the Z-ring. Binds ATP and GTP. This chain is Cell division protein PomZ, found in Myxococcus xanthus (strain DK1622).